A 519-amino-acid chain; its full sequence is Lysine 5,6-aminomutase alpha subunit (519 aa).

57–59 (DEV) is an adenosylcob(III)alamin binding site. Pyridoxal 5'-phosphate is bound by residues 187-192 (RTTGQS), Ser241, Tyr266, Arg271, and Asn302.

The protein belongs to the KamD family. In terms of assembly, heterotetramer of 2 alpha and 2 beta subunits. Adenosylcob(III)alamin is required as a cofactor. The cofactor is pyridoxal 5'-phosphate.

It catalyses the reaction (3S)-3,6-diaminohexanoate = (3S,5S)-3,5-diaminohexanoate. It carries out the reaction D-lysine = (2R,5S)-2,5-diaminohexanoate. It functions in the pathway amino-acid metabolism; lysine degradation. Its activity is regulated as follows. Rapidly inactivated in the presence of D-lysine and to a lesser extent in the absence of adenosylcobalamin (Adocbl). Activity is stable in the presence of Adocbl when D-lysine is absent. Adocbl imparts thermal stability at 37 degrees Celsius. Its function is as follows. Catalyzes the migration of the L-beta-lysine and D-lysine epsilon amino group to the delta carbon to produce 3,5-diaminohexanoate and 2,5-diaminohexanoate, respectively. The sequence is that of Lysine 5,6-aminomutase alpha subunit (kamD) from Acetoanaerobium sticklandii (strain ATCC 12662 / DSM 519 / JCM 1433 / CCUG 9281 / NCIMB 10654 / HF) (Clostridium sticklandii).